The chain runs to 262 residues: MFINLNPLEQFSVYSATSAILGSSSNSLAITSLTNIAILFIIGLLVLTIFQISASSHLIKPTRWNIVLETWVASILGIVKDQIGNDAKNSLIYFPLIFTFFSFVFISNILGMIPYSFTPTSHISVTLGLSIAIMIGVTLIGFSKHQLDFFSLFVPKGTPLALVPLLVLIEFISYSARAFSLALRLTANVSAGHCLFGVISMLSVSACMAVSSILLKGITIGLPLAVLVVLYGLELLVALLQSYVFTLLTCSYLADIVNMGDH.

Transmembrane regions (helical) follow at residues 30–50 (ITSLTNIAILFIIGLLVLTIF), 64–84 (WNIVLETWVASILGIVKDQIG), 91–111 (LIYFPLIFTFFSFVFISNILG), 123–143 (ISVTLGLSIAIMIGVTLIGFS), 149–169 (FFSLFVPKGTPLALVPLLVLI), 195–215 (LFGVISMLSVSACMAVSSILL), and 220–240 (IGLPLAVLVVLYGLELLVALL).

This sequence belongs to the ATPase A chain family. In terms of assembly, F-type ATPases have 2 components, CF(1) - the catalytic core - and CF(0) - the membrane proton channel. CF(1) has five subunits: alpha(3), beta(3), gamma(1), delta(1), epsilon(1). CF(0) has three main subunits: a, b and c.

The protein resides in the mitochondrion inner membrane. Its function is as follows. Mitochondrial membrane ATP synthase (F(1)F(0) ATP synthase or Complex V) produces ATP from ADP in the presence of a proton gradient across the membrane which is generated by electron transport complexes of the respiratory chain. F-type ATPases consist of two structural domains, F(1) - containing the extramembraneous catalytic core and F(0) - containing the membrane proton channel, linked together by a central stalk and a peripheral stalk. During catalysis, ATP synthesis in the catalytic domain of F(1) is coupled via a rotary mechanism of the central stalk subunits to proton translocation. Key component of the proton channel; it may play a direct role in the translocation of protons across the membrane. In Allomyces arbusculus (Aquatic fungus), this protein is ATP synthase subunit a (ATP6).